The sequence spans 260 residues: Arginine esterase (260 aa).

Positions 1–17 are cleaved as a signal peptide; that stretch reads MWFLALCLAMSLGWTGA. Residues 18 to 24 constitute a propeptide, activation peptide; sequence EPHFQPR. One can recognise a Peptidase S1 domain in the interval 25–257; sequence IIGGRECLKN…HLMWIKDTMK (233 aa). 5 disulfides stabilise this stretch: Cys-31-Cys-172, Cys-50-Cys-66, Cys-151-Cys-218, Cys-183-Cys-197, and Cys-208-Cys-233. His-65 functions as the Charge relay system in the catalytic mechanism. Asn-79 carries an N-linked (GlcNAc...) asparagine glycan. Catalysis depends on Asp-119, which acts as the Charge relay system. The active-site Charge relay system is Ser-212.

Belongs to the peptidase S1 family. Kallikrein subfamily.

It catalyses the reaction Preferential cleavage of Arg-|-Xaa bonds in small molecule substrates. Highly selective action to release kallidin (lysyl-bradykinin) from kininogen involves hydrolysis of Met-|-Xaa or Leu-|-Xaa.. Its function is as follows. This serine protease is found in dog seminal plasma, its exact physiological function is not known. This chain is Arginine esterase, found in Canis lupus familiaris (Dog).